Reading from the N-terminus, the 341-residue chain is Gibberellin 2-beta-dioxygenase 5 (341 aa).

One can recognise a Fe2OG dioxygenase domain in the interval 187–290; sequence REETCFLRLN…RFSMAFFLCP (104 aa). Tyrosine 198 contributes to the 2-oxoglutarate binding site. Residues histidine 213, aspartate 215, and histidine 271 each contribute to the Fe cation site. 2-oxoglutarate contacts are provided by arginine 281 and serine 283.

This sequence belongs to the iron/ascorbate-dependent oxidoreductase family. GA2OX subfamily. Requires L-ascorbate as cofactor. The cofactor is Fe(2+). In terms of tissue distribution, expressed in roots, leaves, culms, leaf sheaths and young panicles.

Its subcellular location is the cytoplasm. The protein resides in the nucleus. The catalysed reaction is gibberellin A1 + 2-oxoglutarate + O2 = gibberellin A8 + succinate + CO2. The protein operates within plant hormone biosynthesis; gibberellin biosynthesis. Functionally, catalyzes the 2-beta-hydroxylation of several biologically active gibberellins (GAs), leading to the homeostatic regulation of their endogenous level. Catabolism of GAs plays a central role in plant development. In vitro, converts GA12 and GA53 to the corresponding 2-beta-hydroxylated products GA110 and GA97, respectively. This is Gibberellin 2-beta-dioxygenase 5 from Oryza sativa subsp. japonica (Rice).